The following is a 444-amino-acid chain: Gamma-glutamyl phosphate reductase (444 aa).

This sequence belongs to the gamma-glutamyl phosphate reductase family.

Its subcellular location is the cytoplasm. The enzyme catalyses L-glutamate 5-semialdehyde + phosphate + NADP(+) = L-glutamyl 5-phosphate + NADPH + H(+). It functions in the pathway amino-acid biosynthesis; L-proline biosynthesis; L-glutamate 5-semialdehyde from L-glutamate: step 2/2. Its function is as follows. Catalyzes the NADPH-dependent reduction of L-glutamate 5-phosphate into L-glutamate 5-semialdehyde and phosphate. The product spontaneously undergoes cyclization to form 1-pyrroline-5-carboxylate. This Albidiferax ferrireducens (strain ATCC BAA-621 / DSM 15236 / T118) (Rhodoferax ferrireducens) protein is Gamma-glutamyl phosphate reductase.